A 407-amino-acid chain; its full sequence is Type II secretion system protein L (407 aa).

Topologically, residues 1–257 are cytoplasmic; the sequence is MEGSVSEFLT…WLRYWQIWRK (257 aa). A helical membrane pass occupies residues 258–275; that stretch reads VAIAAGLFVAVSISYSLF. Topologically, residues 276–407 are periplasmic; it reads QAHQYEAQAD…VFGVFVVKPK (132 aa).

The protein belongs to the GSP L family. In terms of assembly, type II secretion system is composed of four main components: the outer membrane complex, the inner membrane complex, the cytoplasmic secretion ATPase and the periplasm-spanning pseudopilus. Forms homodimers. Interacts with EpsM/GspM. Interacts with EpsE/GspE and EpsF/GspF.

It localises to the cell inner membrane. Functionally, inner membrane component of the type II secretion system required for the energy-dependent secretion of extracellular factors such as proteases and toxins from the periplasm. Plays a role in the complex assembly and recruits EpsM resulting in a stable complex in the inner membrane. Provides thus a link between the energy-providing EpsE protein in the cytoplasm and the rest of the T2SS machinery. This is Type II secretion system protein L (epsL) from Vibrio cholerae serotype O1 (strain ATCC 39315 / El Tor Inaba N16961).